A 267-amino-acid polypeptide reads, in one-letter code: Orotidine 5'-phosphate decarboxylase (267 aa).

Residues aspartate 40, 62-64 (KTH), 93-102 (DRKFADIGNT), tyrosine 215, and arginine 234 each bind substrate. Catalysis depends on lysine 95, which acts as the Proton donor.

This sequence belongs to the OMP decarboxylase family.

The enzyme catalyses orotidine 5'-phosphate + H(+) = UMP + CO2. It participates in pyrimidine metabolism; UMP biosynthesis via de novo pathway; UMP from orotate: step 2/2. This Phycomyces blakesleeanus (strain ATCC 8743b / DSM 1359 / FGSC 10004 / NBRC 33097 / NRRL 1555) protein is Orotidine 5'-phosphate decarboxylase (pyrG).